We begin with the raw amino-acid sequence, 108 residues long: Thiosulfate sulfurtransferase GlpE (108 aa).

The region spanning 18-106 (ENEGATLADI…WERSGLPIET (89 aa)) is the Rhodanese domain. Cysteine 66 serves as the catalytic Cysteine persulfide intermediate.

This sequence belongs to the GlpE family.

It is found in the cytoplasm. It carries out the reaction thiosulfate + hydrogen cyanide = thiocyanate + sulfite + 2 H(+). The catalysed reaction is thiosulfate + [thioredoxin]-dithiol = [thioredoxin]-disulfide + hydrogen sulfide + sulfite + 2 H(+). In terms of biological role, transferase that catalyzes the transfer of sulfur from thiosulfate to thiophilic acceptors such as cyanide or dithiols. May function in a CysM-independent thiosulfate assimilation pathway by catalyzing the conversion of thiosulfate to sulfite, which can then be used for L-cysteine biosynthesis. The chain is Thiosulfate sulfurtransferase GlpE from Actinobacillus pleuropneumoniae serotype 7 (strain AP76).